A 510-amino-acid polypeptide reads, in one-letter code: Cytochrome P450 705A20 (510 aa).

The chain crosses the membrane as a helical span at residues Q7–F27.

The protein belongs to the cytochrome P450 family. The cofactor is heme.

Its subcellular location is the membrane. In Arabidopsis thaliana (Mouse-ear cress), this protein is Cytochrome P450 705A20 (CYP705A20).